The chain runs to 181 residues: MKFLFDYFPIICFFVAYKFWGIYIATAAAMVVSALQVAIYWIRFRRFEKFHVITLIFILLLGSFTLVFHNAIFIKWKPTIVYWIFAIVLFGSHFFGKHTLVHRMLKEKIELPAKTWSRLNLSWALFFLILGVLNLFVVYNFDTNTWVNFKLFGTLVLTLVFILGQAFYIARHAQNLKMNSR.

A run of 5 helical transmembrane segments spans residues 8 to 28 (FPII…ATAA), 53 to 73 (ITLI…NAIF), 76 to 96 (WKPT…HFFG), 121 to 141 (LSWA…VYNF), and 149 to 169 (FKLF…AFYI).

The protein belongs to the YciB family.

It is found in the cell inner membrane. Functionally, plays a role in cell envelope biogenesis, maintenance of cell envelope integrity and membrane homeostasis. In Coxiella burnetii (strain RSA 331 / Henzerling II), this protein is Inner membrane-spanning protein YciB.